We begin with the raw amino-acid sequence, 77 residues long: Conotoxin VnMEKL-023 (77 aa).

A signal peptide spans 1–19; it reads MQKLTILLLVAAVLMSTQA. Positions 20–37 are excised as a propeptide; that stretch reads LIKGGGEKRPKEKIRFLS. 3 disulfides stabilise this stretch: Cys51-Cys65, Cys58-Cys69, and Cys64-Cys74.

This sequence belongs to the conotoxin O2 superfamily. Expressed by the venom duct.

Its subcellular location is the secreted. The polypeptide is Conotoxin VnMEKL-023 (Conus ventricosus (Mediterranean cone)).